Reading from the N-terminus, the 170-residue chain is ATP synthase subunit b (170 aa).

A helical transmembrane segment spans residues 11–31 (AFTFGDAFFTLFAFAILLVLI).

The protein belongs to the ATPase B chain family. F-type ATPases have 2 components, F(1) - the catalytic core - and F(0) - the membrane proton channel. F(1) has five subunits: alpha(3), beta(3), gamma(1), delta(1), epsilon(1). F(0) has three main subunits: a(1), b(2) and c(10-14). The alpha and beta chains form an alternating ring which encloses part of the gamma chain. F(1) is attached to F(0) by a central stalk formed by the gamma and epsilon chains, while a peripheral stalk is formed by the delta and b chains.

Its subcellular location is the cell membrane. F(1)F(0) ATP synthase produces ATP from ADP in the presence of a proton or sodium gradient. F-type ATPases consist of two structural domains, F(1) containing the extramembraneous catalytic core and F(0) containing the membrane proton channel, linked together by a central stalk and a peripheral stalk. During catalysis, ATP synthesis in the catalytic domain of F(1) is coupled via a rotary mechanism of the central stalk subunits to proton translocation. In terms of biological role, component of the F(0) channel, it forms part of the peripheral stalk, linking F(1) to F(0). The chain is ATP synthase subunit b from Listeria innocua serovar 6a (strain ATCC BAA-680 / CLIP 11262).